The following is a 344-amino-acid chain: C5a anaphylatoxin chemotactic receptor 2 (344 aa).

Residues M1–L44 lie on the Extracellular side of the membrane. An N-linked (GlcNAc...) asparagine glycan is attached at N3. Residues L45–W67 form a helical membrane-spanning segment. Residues K68–W78 are Cytoplasmic-facing. A helical transmembrane segment spans residues F79–A101. Topologically, residues Q102–T120 are extracellular. Residues C113 and C192 are joined by a disulfide bond. The helical transmembrane segment at I121–F143 threads the bilayer. The Cytoplasmic portion of the chain corresponds to R144–F155. Residues G156–Y178 traverse the membrane as a helical segment. The Extracellular portion of the chain corresponds to R179–T208. The chain crosses the membrane as a helical span at residues V209–R231. Residues Q232–A243 lie on the Cytoplasmic side of the membrane. The chain crosses the membrane as a helical span at residues V244–P266. At P267 to P280 the chain is on the extracellular side. A helical membrane pass occupies residues L281–F300. Residues G301–V344 lie on the Cytoplasmic side of the membrane. At S325 the chain carries Phosphoserine.

This sequence belongs to the G-protein coupled receptor 1 family. In terms of assembly, interacts with C3 (the anaphylatoxin peptide C3a and the adipogenic hormone ASP); the interaction occurs with higher affinity for ASP, enhancing the phosphorylation and activation of GPR77, recruitment of ARRB2 to the cell surface and endocytosis of GRP77. In terms of tissue distribution, highly expressed in liver and spleen. Lower levels in intestine, brain and kidney. Also expressed in adipose tissues with highest levels in gonadal and ingual fat depots. Lower levels in brown tissue.

The protein resides in the cell membrane. Receptor for the chemotactic and inflammatory C3a, C4a and C5a anaphylatoxin peptides and also for their dearginated forms ASP/C3adesArg, C4adesArg and C5adesArg respectively. Couples weakly to G(i)-mediated signaling pathways. The protein is C5a anaphylatoxin chemotactic receptor 2 (C5ar2) of Mus musculus (Mouse).